Reading from the N-terminus, the 588-residue chain is Aspartate--tRNA ligase (588 aa).

Position 172 (E172) interacts with L-aspartate. The interval 196–199 (QLFK) is aspartate. Position 218 (R218) interacts with L-aspartate. Residues 218–220 (RDE) and Q227 each bind ATP. H449 contributes to the L-aspartate binding site. An ATP-binding site is contributed by E483. An L-aspartate-binding site is contributed by R490. 535-538 (GLDR) is a binding site for ATP.

The protein belongs to the class-II aminoacyl-tRNA synthetase family. Type 1 subfamily. Homodimer.

The protein resides in the cytoplasm. It carries out the reaction tRNA(Asp) + L-aspartate + ATP = L-aspartyl-tRNA(Asp) + AMP + diphosphate. Catalyzes the attachment of L-aspartate to tRNA(Asp) in a two-step reaction: L-aspartate is first activated by ATP to form Asp-AMP and then transferred to the acceptor end of tRNA(Asp). The protein is Aspartate--tRNA ligase of Histophilus somni (strain 2336) (Haemophilus somnus).